Reading from the N-terminus, the 277-residue chain is RNA-binding protein pno-1 (277 aa).

Disordered stretches follow at residues 1-52 (MATS…KLVK) and 72-100 (DEDA…GESR). Over residues 8-27 (FDDELPMEEGMPELLDDEDV) the composition is skewed to acidic residues. A compositionally biased stretch (polar residues) spans 30 to 40 (TLPSLLEQNLD). The segment covering 72–81 (DEDATADTAD) has biased composition (acidic residues). The region spanning 198–250 (GDHVSRAIGRIAGKDGRTKLVIENTTKTRIVVANTKIHILGAYQNLKLARNAV) is the KH domain.

The protein belongs to the PNO1 family. In terms of assembly, part of the small subunit (SSU) processome, composed of more than 70 proteins and the RNA chaperone small nucleolar RNA (snoRNA) U3.

It localises to the nucleus. It is found in the nucleolus. Functionally, part of the small subunit (SSU) processome, first precursor of the small eukaryotic ribosomal subunit. During the assembly of the SSU processome in the nucleolus, many ribosome biogenesis factors, an RNA chaperone and ribosomal proteins associate with the nascent pre-rRNA and work in concert to generate RNA folding, modifications, rearrangements and cleavage as well as targeted degradation of pre-ribosomal RNA by the RNA exosome. Positively regulates dimethylation of two adjacent adenosines in the loop of a conserved hairpin near the 3'-end of 18S rRNA. This chain is RNA-binding protein pno-1, found in Caenorhabditis elegans.